An 880-amino-acid polypeptide reads, in one-letter code: Replication origin-binding protein (880 aa).

The 166-residue stretch at 60–225 (PLPIRTKPVL…AELRGAENVH (166 aa)) folds into the Helicase ATP-binding domain. 73–80 (APMGSGKT) serves as a coordination point for ATP. The segment at 260–287 (PPAGDESREASASQPPPHDSSNEPCAPE) is disordered.

This sequence belongs to the herpesviridae OriBP family. Homodimer. Interacts with the major DNA-binding protein. Interacts with the DNA helicase/primase complex-associated protein and the polymerase accessory protein.

It localises to the host nucleus. Functionally, functions as a docking protein to recruit essential components of the viral replication machinery to viral DNA origins. In the presence of the major DNA-binding protein, opens dsDNA leading to a conformational change in the origin that facilitates DNA unwinding and subsequent replication. This Psittacid herpesvirus 1 (isolate Amazon parrot/-/97-0001/1997) (PsHV-1) protein is Replication origin-binding protein (UL9).